We begin with the raw amino-acid sequence, 418 residues long: Actin-related protein 3-A (418 aa).

The protein belongs to the actin family. ARP3 subfamily. As to quaternary structure, component of the Arp2/3 complex composed of actr2/arp2, actr3/arp3, arpc1 (arpc1a or arpc1b), arpc2, arpc3, arpc4 and arpc5.

The protein localises to the cytoplasm. It is found in the cytoskeleton. It localises to the cell projection. Its subcellular location is the nucleus. Functionally, ATP-binding component of the Arp2/3 complex, a multiprotein complex that mediates actin polymerization upon stimulation by nucleation-promoting factor (NPF). The Arp2/3 complex mediates the formation of branched actin networks in the cytoplasm, providing the force for cell motility. Seems to contact the pointed end of the daughter actin filament. In addition to its role in the cytoplasmic cytoskeleton, the Arp2/3 complex also promotes actin polymerization in the nucleus, thereby regulating gene transcription and repair of damaged DNA. The Arp2/3 complex promotes homologous recombination (HR) repair in response to DNA damage by promoting nuclear actin polymerization, leading to drive motility of double-strand breaks (DSBs). The polypeptide is Actin-related protein 3-A (Xenopus laevis (African clawed frog)).